Reading from the N-terminus, the 632-residue chain is Protein EAP1 (632 aa).

Disordered regions lie at residues Met-1–Lys-80, Met-149–Glu-204, and Lys-248–Ser-313. 2 stretches are compositionally biased toward polar residues: residues Ser-7–Phe-38 and Val-54–Gly-69. The residue at position 30 (Ser-30) is a Phosphoserine. Phosphoserine occurs at positions 281 and 282. Residues Asn-288–Ser-298 show a composition bias toward basic and acidic residues. Phosphoserine occurs at positions 327 and 344. The segment at Ser-347–Ser-378 is disordered. Residues Asn-353–Ser-371 are compositionally biased toward low complexity. The residue at position 387 (Ser-387) is a Phosphoserine. 2 disordered regions span residues Gln-429–Pro-541 and Gln-587–Lys-632. Position 440 to 447 (Gly-440 to Ser-447) interacts with ATP. The segment covering Pro-474 to Gly-486 has biased composition (pro residues). Basic and acidic residues predominate over residues Lys-492–Leu-505. 3 stretches are compositionally biased toward polar residues: residues Gln-507–Asn-516, Phe-590–Pro-603, and Ile-610–Leu-621.

As to quaternary structure, interacts with SMY2, SYH1 and eIF4E.

The protein resides in the cytoplasm. Can regulate translation through binding to eIF4E. Competes with eIF4G and p20 for binding to eIF4E in vivo and inhibits cap-dependent translation in vitro. Plays a role in cell growth and is implicated in the TOR signaling cascade. Functions independently of eIF4E to maintain genetic stability and to attenuate GCN4 translation upon TOR inactivation. This Saccharomyces cerevisiae (strain ATCC 204508 / S288c) (Baker's yeast) protein is Protein EAP1 (EAP1).